The chain runs to 349 residues: NADH-ubiquinone oxidoreductase chain 2 (349 aa).

Transmembrane regions (helical) follow at residues 3–23 (PYVL…TFAS), 25–45 (HWLL…PIMA), 66–86 (AAAM…EWEI), 98–118 (VMLA…LPEV), 149–171 (INSS…GGLN), 178–197 (ILAY…LQYA), 202–219 (LLSL…FLTL), 240–260 (LAAL…LSGF), 274–294 (GLPL…YFYL), and 319–339 (FTLI…LLPL).

Belongs to the complex I subunit 2 family.

The protein localises to the mitochondrion inner membrane. The catalysed reaction is a ubiquinone + NADH + 5 H(+)(in) = a ubiquinol + NAD(+) + 4 H(+)(out). Core subunit of the mitochondrial membrane respiratory chain NADH dehydrogenase (Complex I) that is believed to belong to the minimal assembly required for catalysis. Complex I functions in the transfer of electrons from NADH to the respiratory chain. The immediate electron acceptor for the enzyme is believed to be ubiquinone. This is NADH-ubiquinone oxidoreductase chain 2 (MT-ND2) from Salmo salar (Atlantic salmon).